The sequence spans 225 residues: 2-C-methyl-D-erythritol 4-phosphate cytidylyltransferase (225 aa).

It belongs to the IspD/TarI cytidylyltransferase family. IspD subfamily.

The catalysed reaction is 2-C-methyl-D-erythritol 4-phosphate + CTP + H(+) = 4-CDP-2-C-methyl-D-erythritol + diphosphate. Its pathway is isoprenoid biosynthesis; isopentenyl diphosphate biosynthesis via DXP pathway; isopentenyl diphosphate from 1-deoxy-D-xylulose 5-phosphate: step 2/6. Catalyzes the formation of 4-diphosphocytidyl-2-C-methyl-D-erythritol from CTP and 2-C-methyl-D-erythritol 4-phosphate (MEP). This Prochlorococcus marinus (strain NATL2A) protein is 2-C-methyl-D-erythritol 4-phosphate cytidylyltransferase.